A 304-amino-acid chain; its full sequence is D-tagatose-1-phosphate kinase (304 aa).

Asp-250 acts as the Proton acceptor in catalysis.

The protein belongs to the carbohydrate kinase PfkB family. It depends on Mg(2+) as a cofactor.

The catalysed reaction is alpha-D-tagatopyranose 1-phosphate + ATP = D-tagatofuranose 1,6-bisphosphate + ADP + H(+). It functions in the pathway carbohydrate degradation. Kinase involved in a D-tagatose catabolic pathway. Catalyzes the phosphorylation of D-tagatose-1-phosphate (Tag-1P) to D-tagatose-1,6-bisphosphate. In Klebsiella oxytoca, this protein is D-tagatose-1-phosphate kinase.